Here is a 755-residue protein sequence, read N- to C-terminus: MVSTPPTLLMLFDDGDAGPSTGLVHREKSDAVNEEAHATSVPPHAPPQTLWLLDNFNIEDSYDRDAGPSTGPVHRERSDAVNEEAHATSIPPHAPPQTLWLLDNFNIEDSYDRDAGPSTSPIDREASHEVNEDAHATSAPPHVMVSPLQNRRPFDQFNNQPYDASAGPSTGPGKRGRGRPKGSKNGSRKPKKPKAYDNNSTDASAGPSSGLGKRRCGRPKGLKNRSRKPKKPKADDPNSKMVISCPDFDSRITEAERESGNQEIVDSILMRFDAVRRRLCQLNYRKDKILTASTNCMNLGVRTNMTRRIGPIPGVQVGDIFYYWCEMCLVGLHRNTAGGIDSLLAKESGVDGPAATSVVTSGKYDNETEDLETLIYSGHGGKPCDQVLQRGNRALEASVRRRNEVRVIRGELYNNEKVYIYDGLYLVSDCWQVTGKSGFKEYRFKLLRKPGQPPGYAIWKLVENLRNHELIDPRQGFILGDLSFGEEGLRVPLVNEVDEEDKTIPDDFDYIRSQCYSGMTNDVNVDSQSLVQSYIHQNCTCILKNCGQLPYHDNILVCRKPLIYECGGSCPTRMVETGLKLHLEVFKTSNCGWGLRSWDPIRAGTFICEFTGVSKTKEEVEEDDDYLFDTSRIYHSFRWNYEPELLCEDACEQVSEDANLPTQVLISAKEKGNVGRFMNHNCWPNVFWQPIEYDDNNGHIYVRIGLFAMKHIPPMTELTYDYGISCVEKTGEDEVIYKGKKICLCGSVKCRGSFG.

Disordered regions lie at residues 62–98 (YDRDAGPSTGPVHRERSDAVNEEAHATSIPPHAPPQT) and 111–243 (YDRD…KMVI). Basic and acidic residues-rich tracts occupy residues 73–86 (VHRERSDAVNEEAH) and 122–135 (IDREASHEVNEDAH). A DNA-binding region (a.T hook) is located at residues 174–186 (KRGRGRPKGSKNG). Over residues 174-193 (KRGRGRPKGSKNGSRKPKKP) the composition is skewed to basic residues. Positions 197–207 (DNNSTDASAGP) are enriched in polar residues. The segment covering 212-231 (GKRRCGRPKGLKNRSRKPKK) has biased composition (basic residues). Residues 310 to 448 (GPIPGVQVGD…FKEYRFKLLR (139 aa)) form the YDG domain. Residues 528-578 (QSLVQSYIHQNCTCILKNCGQLPYHDNILVCRKPLIYECGGSCPTRMVETG) form the Pre-SET domain. Residues 581-723 (LHLEVFKTSN…PMTELTYDYG (143 aa)) enclose the SET domain. Residues 591–593 (CGW), aspartate 624, tyrosine 626, arginine 676, and 679–680 (NH) contribute to the S-adenosyl-L-methionine site. Zn(2+)-binding residues include cysteine 682, cysteine 743, cysteine 745, and cysteine 750. The 17-residue stretch at 739 to 755 (GKKICLCGSVKCRGSFG) folds into the Post-SET domain.

Belongs to the class V-like SAM-binding methyltransferase superfamily. Histone-lysine methyltransferase family. Suvar3-9 subfamily.

It is found in the nucleus. Its subcellular location is the chromosome. The protein localises to the centromere. The enzyme catalyses N(6)-methyl-L-lysyl(9)-[histone H3] + S-adenosyl-L-methionine = N(6),N(6)-dimethyl-L-lysyl(9)-[histone H3] + S-adenosyl-L-homocysteine + H(+). It carries out the reaction L-lysyl(9)-[histone H3] + S-adenosyl-L-methionine = N(6)-methyl-L-lysyl(9)-[histone H3] + S-adenosyl-L-homocysteine + H(+). Functionally, histone methyltransferase. Methylates 'Lys-9' of histone H3. H3 'Lys-9' methylation represents a specific tag for epigenetic transcriptional repression. The chain is Histone-lysine N-methyltransferase, H3 lysine-9 specific SUVH8 (SUVH8) from Arabidopsis thaliana (Mouse-ear cress).